Here is a 180-residue protein sequence, read N- to C-terminus: Beta-lactoglobulin (180 aa).

Residues 1 to 18 (MKCLLLALGLALACGIQA) form the signal peptide. Intrachain disulfides connect C84-C178, C124-C137, and C124-C139.

This sequence belongs to the calycin superfamily. Lipocalin family. As to quaternary structure, under physiological conditions beta-lactoglobulin exists as an equilibrium mixture of monomeric and dimeric forms. Interaction with LMBR1L is controversial. Alternate disulfide bonds occur in equal amounts. In terms of tissue distribution, synthesized in mammary gland and secreted in milk.

It localises to the secreted. Its function is as follows. Primary component of whey, it binds retinol and is probably involved in the transport of that molecule. The chain is Beta-lactoglobulin (LGB) from Capra hircus (Goat).